Reading from the N-terminus, the 1451-residue chain is Dicer-like protein 2 (1451 aa).

The interval 34-53 (YDGHLSEEDSPGGKPRPKEQ) is disordered. Residues 70 to 247 (MLEASLKENI…LKRLESTLDA (178 aa)) form the Helicase ATP-binding domain. 83–90 (MDTGSGKT) contributes to the ATP binding site. The short motif at 190–193 (DEAH) is the DEAH box element. A Helicase C-terminal domain is found at 412 to 582 (KVQRIIEVLL…RLEAIENSEA (171 aa)). A Dicer dsRNA-binding fold domain is found at 603–704 (AKSHLQHFVS…LPLRDRLELE (102 aa)). RNase III domains follow at residues 968–1111 (AAEL…VDGG) and 1153–1351 (LQLL…VDAG). E1192 provides a ligand contact to Mg(2+). The segment at 1253 to 1272 (EGDSDSKSSGDSTSDKASPR) is disordered. 2 residues coordinate Mg(2+): D1337 and E1340.

It belongs to the helicase family. Dicer subfamily. Mg(2+) is required as a cofactor. Mn(2+) serves as cofactor.

Dicer-like endonuclease involved in cleaving double-stranded RNA in the RNA interference (RNAi) pathway. Produces 21 to 25 bp dsRNAs (siRNAs) which target the selective destruction of homologous RNAs leading to sequence-specific suppression of gene expression, called post-transcriptional gene silencing (PTGS). Part of a broad host defense, DCL-2 is involved in antiviral defense against mycoviruses like the hypovirus CHV1-EP713 and the reovirus MyRV1-Cp9B21. This is Dicer-like protein 2 (DCL-2) from Cryphonectria parasitica (Chestnut blight fungus).